Consider the following 236-residue polypeptide: Exosome complex component Rrp4 (236 aa).

The S1 motif domain occupies Gly-64 to Lys-133. The KH domain occupies Glu-141–Ile-199.

It belongs to the RRP4 family. As to quaternary structure, component of the archaeal exosome complex. Forms a trimer of Rrp4 and/or Csl4 subunits. The trimer associates with a hexameric ring-like arrangement composed of 3 Rrp41-Rrp42 heterodimers.

The protein resides in the cytoplasm. Functionally, non-catalytic component of the exosome, which is a complex involved in RNA degradation. Increases the RNA binding and the efficiency of RNA degradation. Confers strong poly(A) specificity to the exosome. This is Exosome complex component Rrp4 from Thermoplasma acidophilum (strain ATCC 25905 / DSM 1728 / JCM 9062 / NBRC 15155 / AMRC-C165).